A 242-amino-acid polypeptide reads, in one-letter code: NAD(P)H-hydrate epimerase (242 aa).

In terms of domain architecture, YjeF N-terminal spans 11 to 221; that stretch reads AKALDAELMS…KVITKKFNLS (211 aa). 61–65 lines the (6S)-NADPHX pocket; sequence NNGGD. K(+)-binding residues include asparagine 62 and aspartate 128. (6S)-NADPHX-binding positions include 132-138 and aspartate 161; that span reads GFSFKGP. Serine 164 contributes to the K(+) binding site.

This sequence belongs to the NnrE/AIBP family. K(+) is required as a cofactor.

The protein localises to the cytoplasm. Its subcellular location is the mitochondrion. The protein resides in the nucleus. It catalyses the reaction (6R)-NADHX = (6S)-NADHX. The enzyme catalyses (6R)-NADPHX = (6S)-NADPHX. In terms of biological role, catalyzes the epimerization of the S- and R-forms of NAD(P)HX, a damaged form of NAD(P)H that is a result of enzymatic or heat-dependent hydration. This is a prerequisite for the S-specific NAD(P)H-hydrate dehydratase to allow the repair of both epimers of NAD(P)HX. May have a role in meiosis. In Schizosaccharomyces pombe (strain 972 / ATCC 24843) (Fission yeast), this protein is NAD(P)H-hydrate epimerase (mug182).